The sequence spans 1262 residues: MAFDNFEILYKETRLNLEPASPSSVVQLRVAPTNAYGRSSLSSSSSSRPASATADDEKGYRTKNLATASSIYYRKHHSSPRGFLWRVLDNNTVLSIRVADVCRQEKVADAPLILNLRFASPLRPACVGFADHEDHDALFVYAIDQSNQLWSIILRPDHFRKRSATEGGLGDASRVYSPPGFGFKHPHRLAVVSPDQLIVTMHDGGILKFDRNKNHESHGSPWRESIYNVAGWGQSLRGLVPFQRNPTVRYEKINMELTAAASTAVTTMGHAETAFLFTICLDHRMRVWDVRTGQILYTGDILNNTKRDPQEVGKWTVDPSQNNLIRILDNGRGQCLVVTYSPVGAGEFKFWKVKANDQGSIHVTDCFPDARLMSPNPTSLDVWTLADFAIAQQPDGPELWALWKNNTSYRVNRLQIIPRNATAPFADGWKAVCVESPGPTPRASGSWNPTDSTEKWLDLIFSPGRFSKSTLETALAMYEKGLGTYKETVSRSGKGIAESICSVIGSTTTLDRSSQGGADYDQFRNTSETQWMRFWRLLLELDKQRGEALSLVFDQYDGMVWVTCADLLAAVRQCSDLERLYHNLQSPEKKNEDVAALISAGLTFVETFSDSMHQLCKAALRAELYENSALSDRERMQLFLDRAGFWVTDEDWAQVLDIVGQNYQMVTSRLYEDLFDLITATSEANSQELREPFTIFGKKVVVRAVQETVELHWQILFSQLILLVNMVDSESEEARPLHTRFDVGSVYRRLIDALRRLEHLRWMTKTELSVSPSKSRSGSSSPTLSKRGQDESYTRTALEELAGHLFGLPESNNMPLLSSITDLVLDLCAPTSTTVLNTWLIQCWLLKEGRPDLALELMPFAEQDPFSTYVQGRVFLALRDYDTAAQHFRKAAIGLSIPLKHVDRHSAGLLDDTEWNLLNSGLPNYYAHIVNLYDKQKAYSYVMEFSRLALQFAQTSNQDSASIKTEMLSRLFTASTATSHFEEAHSALLAMDDEALQKSYLRKLLERMCESGQSSELISLPFSGLQNKVDEILAEKCRATRDVLNGVPYHQILYAWRISHNDYRGAAAILLDRLEKLRRSGEGDKLGAEDGENGAGNDALDTQVTRQYLIVINALSCVAPQEAYILEDVPPPVPGKGTNDEEYSQTGSKRKLGKLNATSGEEDLDSRIEELARLLDSESAGDKKARPSSSSEEDQQLLERMQKFSTAVRQEQGQQTPRRLLRLEDLRKQYQQELDRIVAIQNNQFALTADGEDEDEDMMDIA.

Disordered stretches follow at residues 36–58 (YGRSSLSSSSSSRPASATADDEK), 770–791 (VSPSKSRSGSSSPTLSKRGQDE), and 1128–1196 (DVPP…EDQQ). Residues 770–786 (VSPSKSRSGSSSPTLSK) are compositionally biased toward low complexity. A compositionally biased stretch (basic and acidic residues) spans 1165 to 1185 (DSRIEELARLLDSESAGDKKA).

In terms of assembly, component of the nuclear pore complex (NPC). The nuclear pore complex (NPC) constitutes the exclusive means of nucleocytoplasmic transport. NPCs allow the passive diffusion of ions and small molecules and the active, nuclear transport receptor-mediated bidirectional transport of macromolecules such as proteins, RNAs, ribonucleoparticles (RNPs), and ribosomal subunits across the nuclear envelope. Due to its 8-fold rotational symmetry, all subunits are present with 8 copies or multiples thereof.

It localises to the nucleus. The protein resides in the nuclear pore complex. It is found in the nucleus membrane. Its function is as follows. Functions as a component of the nuclear pore complex (NPC). NPC components, collectively referred to as nucleoporins (NUPs), can play the role of both NPC structural components and of docking or interaction partners for transiently associated nuclear transport factors. NUP120 is involved in nuclear poly(A)+ RNA and pre-ribosome export, in GSP1 nuclear import, in NPC assembly and distribution, as well as in nuclear envelope organization. The protein is Nucleoporin NUP120 (NUP120) of Chaetomium thermophilum (strain DSM 1495 / CBS 144.50 / IMI 039719) (Thermochaetoides thermophila).